We begin with the raw amino-acid sequence, 885 residues long: Exosome complex component 10 (885 aa).

Residue K19 forms a Glycyl lysine isopeptide (Lys-Gly) (interchain with G-Cter in SUMO2) linkage. The 167-residue stretch at 289–455 (HFISSLDELV…YIYDKMRLEM (167 aa)) folds into the 3'-5' exonuclease domain. Residues D313, E315, D371, and D440 each contribute to the Mg(2+) site. The region spanning 503 to 583 (NTQQLTAFQL…QQAREMPLLK (81 aa)) is the HRDC domain. A Glycyl lysine isopeptide (Lys-Gly) (interchain with G-Cter in SUMO1); alternate cross-link involves residue K583. A Glycyl lysine isopeptide (Lys-Gly) (interchain with G-Cter in SUMO2); alternate cross-link involves residue K583. K710 participates in a covalent cross-link: Glycyl lysine isopeptide (Lys-Gly) (interchain with G-Cter in SUMO2). Composition is skewed to basic and acidic residues over residues 776-794 (AAKK…EQKQ) and 804-816 (KPKD…KEFT). The disordered stretch occupies residues 776 to 885 (AAKKRERATS…RGFRYNWPQR (110 aa)). At S821 the chain carries Phosphoserine. Residues K826, K833, and K859 each participate in a glycyl lysine isopeptide (Lys-Gly) (interchain with G-Cter in SUMO2) cross-link. Residues 831-848 (NSKSKVSSQFDPNKQTPS) are compositionally biased toward polar residues. Residues 861 to 871 (SVGNKSMSFPT) are compositionally biased toward polar residues. A Glycyl lysine isopeptide (Lys-Gly) (interchain with G-Cter in SUMO2) cross-link involves residue K873.

Belongs to the exosome component 10/RRP6 family. As to quaternary structure, component of the RNA exosome complex. The catalytically inactive RNA exosome core complex (Exo-9) associates with the catalytic subunit EXOSC10/RRP6 (via its N-terminus). Exo-9 may associate with DIS3 to form the nucleolar exosome complex, or DIS3L to form the cytoplasmic exosome complex. The RNA exosome complex interacts with cofactors C1D/RRP47, MPHOSPH6/MPP6 and MTREX/MTR4. Interacts with MTREX; the interaction with MTREX mediates the association of MTREX with nuclear RNA exosomes. Part of the small subunit (SSU) processome, composed of more than 70 proteins and the RNA chaperone small nucleolar RNA (snoRNA) U3. Interacts with ALYREF/THOC4. Interacts with DHX36; this interaction occurs in a RNase-insensitive manner. Interacts with NRDE2. Interacts (via C-terminus) with USP36 (via C-terminus); the interaction is facilitated by the association with RNA and promotes sumoylation of EXOSC10. Mg(2+) is required as a cofactor. Post-translationally, sumoylated by USP36; sumoylation does not significantly affect EXOSC10 nucleolar localization and association with core exosome and USP36, but regulates the nucleolar RNA exosome activity in rRNA processing by promoting binding of EXOSC10 to pre-rRNAs. Effects of sumoylation on EXOSC10 levels vary between different studies. Sumoylation of EXOSC10 is required for the modulation of EXOSC10 effects on cellular protein translation and cell proliferation. Sumoylation is promoted by mild hypothermia.

It is found in the cytoplasm. The protein resides in the nucleus. The protein localises to the nucleolus. Its subcellular location is the nucleoplasm. Its activity is regulated as follows. Arginine-rich dipeptide repeat proteins expressed from C9orf72-derived repeat RNA interact with EXOSC10 and inhibit its ability to promote degradation of this RNA. In terms of biological role, catalytic component of the RNA exosome complex which has 3'-&gt;5' exoribonuclease activity and participates in a multitude of cellular RNA processing and degradation events. In the nucleus, the RNA exosome complex is involved in proper maturation of stable RNA species such as rRNA, snRNA and snoRNA, in the elimination of RNA processing by-products and non-coding 'pervasive' transcripts, such as antisense RNA species and promoter-upstream transcripts (PROMPTs), and of mRNAs with processing defects, thereby limiting or excluding their export to the cytoplasm. Part of the small subunit (SSU) processome, first precursor of the small eukaryotic ribosomal subunit. During the assembly of the SSU processome in the nucleolus, many ribosome biogenesis factors, an RNA chaperone and ribosomal proteins associate with the nascent pre-rRNA and work in concert to generate RNA folding, modifications, rearrangements and cleavage as well as targeted degradation of pre-ribosomal RNA by the RNA exosome. The RNA exosome may be involved in Ig class switch recombination (CSR) and/or Ig variable region somatic hypermutation (SHM) by targeting AICDA deamination activity to transcribed dsDNA substrates. In the cytoplasm, the RNA exosome complex is involved in general mRNA turnover and specifically degrades inherently unstable mRNAs containing AU-rich elements (AREs) within their 3' untranslated regions, and in RNA surveillance pathways, preventing translation of aberrant mRNAs. It seems to be involved in degradation of histone mRNA. EXOSC10 is required for nucleolar localization of C1D and probably mediates the association of MTREX, C1D and MPHOSPH6 with the RNA exosome involved in the maturation of 5.8S rRNA. Plays a role in the recruitment of replication protein A complex (RPA) and RAD51 to DNA double-strand breaks caused by irradiation, contributing to DNA repair by homologous recombination. Regulates levels of damage-induced RNAs in order to prevent DNA-RNA hybrid formation at DNA double-strand breaks and limit DNA end resection after damage. Plays a role in oocyte development, maturation and survival. Required for normal testis development and mitotic division of spermatogonia. Plays a role in proper embryo development. Required for global protein translation. Required for cell proliferation. Regulates metabolism of C9orf72-derived repeat RNA that can be translated into toxic dipeptide repeat proteins. This is Exosome complex component 10 from Homo sapiens (Human).